The primary structure comprises 81 residues: Protein PYP1 (81 aa).

The transit peptide at 1–25 (MAFVSGFTGMPVTARVSKAVCRTRM) directs the protein to the chloroplast. The disordered stretch occupies residues 27–57 (LEGGKSSGGGEATRDPEPTAVDPNDPKGKQQ).

It is found in the plastid. It localises to the chloroplast. The protein is Protein PYP1 of Pyropia yezoensis (Susabi-nori).